Here is a 117-residue protein sequence, read N- to C-terminus: MTMRATRVGEQMKKELGDIIGRKLKDPRIGFLTVTDVRVSGDLQIAKVYISVLGDEKKREETLKGLAKAKGFIRSELGNRIRLRKTPEIHFEFDESIDYGNRIETLIHELNANKEES.

It belongs to the RbfA family. Monomer. Binds 30S ribosomal subunits, but not 50S ribosomal subunits or 70S ribosomes.

It localises to the cytoplasm. Its function is as follows. One of several proteins that assist in the late maturation steps of the functional core of the 30S ribosomal subunit. Associates with free 30S ribosomal subunits (but not with 30S subunits that are part of 70S ribosomes or polysomes). Required for efficient processing of 16S rRNA. May interact with the 5'-terminal helix region of 16S rRNA. This is Ribosome-binding factor A from Bacillus licheniformis (strain ATCC 14580 / DSM 13 / JCM 2505 / CCUG 7422 / NBRC 12200 / NCIMB 9375 / NCTC 10341 / NRRL NRS-1264 / Gibson 46).